The chain runs to 1795 residues: Protein TIC 214 (1795 aa).

Transmembrane regions (helical) follow at residues 19-39 (IINS…FSIG), 68-88 (FIAG…HLAL), 91-111 (PHTI…WNNH), 133-153 (VFLN…SSML), 176-196 (VGWL…LVWI), and 227-247 (IFSI…PSPI). The interval 1490 to 1517 (EKESTGQVEFESDKEQQRNSESALSNQE) is disordered. Positions 1508 to 1517 (NSESALSNQE) are enriched in polar residues.

This sequence belongs to the TIC214 family. In terms of assembly, part of the Tic complex.

It is found in the plastid. The protein resides in the chloroplast inner membrane. Functionally, involved in protein precursor import into chloroplasts. May be part of an intermediate translocation complex acting as a protein-conducting channel at the inner envelope. This Crucihimalaya wallichii (Rock-cress) protein is Protein TIC 214.